The chain runs to 456 residues: Argininosuccinate lyase (456 aa).

Belongs to the lyase 1 family. Argininosuccinate lyase subfamily.

The protein resides in the cytoplasm. It carries out the reaction 2-(N(omega)-L-arginino)succinate = fumarate + L-arginine. Its pathway is amino-acid biosynthesis; L-arginine biosynthesis; L-arginine from L-ornithine and carbamoyl phosphate: step 3/3. In Listeria innocua serovar 6a (strain ATCC BAA-680 / CLIP 11262), this protein is Argininosuccinate lyase.